A 208-amino-acid chain; its full sequence is Fusaric acid resistance protein FusD (208 aa).

A helical transmembrane segment spans residues 7–29 (LLLSMLVSAIAFAVLFPPTAPWL).

It localises to the cell membrane. Functionally, involved in the resistance (detoxification) of the fungal toxin fusaric acid. This Burkholderia cepacia (Pseudomonas cepacia) protein is Fusaric acid resistance protein FusD (fusD).